Here is a 726-residue protein sequence, read N- to C-terminus: MLLCLTLLFSASAVLAMPTPEGSPHHEIYKVCVPEGALESCHRMSQESDLHMTCVAARDRIECLDKIKHREADFAPVDPEDMYVAAKIPQQDFIIFKEIRTKEEPDEEFRYEAVCVIHKDLDITSIHGLQGLKSCHTGVGRNVGYKIPITKLRHMGVLGPLNNSDLTPRENELHALSHLFSEACLVGKWAPDPAQNQALKAKYPNLCALCEHPEICDYPDKYSGYDGALRCLAEHGGQVAWTKVYYVKKHFGMAIGAGEAVPTGQNPDDYAYLCPDATKKPITGKPCIWAARPWQGYMANHDLDNDIADLRAKISLADTIGETENADWLSKVLDLNNKTIPIDNQGPYSPENYLNKANYTDVIERDTGAPHRPVRFCVTSDAELEKCRVLKRAAYSRDIRPAFDCVREAGLHECLRTVRDDGADVITLDGGEVFVAQRQYNLKPIVAEQYGEHGSLYYAVAVVRKDSTYQSIEDLRGAKSCHTGYGRNAGWNVPLYTLLSKELISKNSCPYSSALSSYFSGGSCVPGAQLPENNPANQNPDSLCSICAGNLDAPNNDPAWKCSASNDESFFGYSGAFRCLASGEGQVAFVKHTTVPENTDGHNQAAWTAGLRSEDFELLCADGGRASINEYSRCHLAEVPPHMVVTSNDKTDIQLNEIRHAILAAGDLYSRRPDLFKLFGDFGGTKDLLFKNSATGLLSVENGSPLMQRYSEILEVIRACENQPTP.

The N-terminal stretch at 1 to 16 is a signal peptide; the sequence is MLLCLTLLFSASAVLA. 2 Transferrin-like domains span residues 29 to 367 and 374 to 719; these read YKVC…ERDT and VRFC…VIRA. 2 cysteine pairs are disulfide-bonded: C32–C63 and C41–C54. Residues D78 and Y111 each coordinate Fe(3+). Disulfide bonds link C135-C231, C184-C210, C207-C216, and C274-C287. Hydrogencarbonate is bound by residues T137, R141, V143, and G144. The N-linked (GlcNAc...) asparagine glycan is linked to N162. Y225 lines the Fe(3+) pocket. N337 and N358 each carry an N-linked (GlcNAc...) asparagine glycan. 2 disulfide bridges follow: C377–C414 and C387–C405. 2 residues coordinate Fe(3+): D429 and Y457. The cysteines at positions 481 and 562 are disulfide-linked. Positions 483, 487, 489, and 490 each coordinate hydrogencarbonate. Fe(3+) contacts are provided by Y573 and H642.

Belongs to the transferrin family.

It is found in the secreted. Functionally, transferrins are iron binding transport proteins which bind Fe(3+) ion in association with the binding of an anion, usually bicarbonate. This Blaberus discoidalis (Tropical cockroach) protein is Transferrin.